We begin with the raw amino-acid sequence, 285 residues long: Phosphate import ATP-binding protein PstB (285 aa).

In terms of domain architecture, ABC transporter spans 39-280; that stretch reads LEVSDLQLWY…PAKKQTEDYI (242 aa). Residue 71–78 participates in ATP binding; the sequence is GPSGCGKS.

It belongs to the ABC transporter superfamily. Phosphate importer (TC 3.A.1.7) family. In terms of assembly, the complex is composed of two ATP-binding proteins (PstB), two transmembrane proteins (PstC and PstA) and a solute-binding protein (PstS).

The protein localises to the cell inner membrane. The enzyme catalyses phosphate(out) + ATP + H2O = ADP + 2 phosphate(in) + H(+). Its function is as follows. Part of the ABC transporter complex PstSACB involved in phosphate import. Responsible for energy coupling to the transport system. The chain is Phosphate import ATP-binding protein PstB from Alkalilimnicola ehrlichii (strain ATCC BAA-1101 / DSM 17681 / MLHE-1).